A 25-amino-acid chain; its full sequence is Cruzioseptin-13 (25 aa).

An Asparagine amide modification is found at Asn-25.

As to expression, expressed by the skin glands.

The protein localises to the secreted. Its function is as follows. Has antimicrobial activity. In Cruziohyla calcarifer (Splendid leaf frog), this protein is Cruzioseptin-13.